Here is an 813-residue protein sequence, read N- to C-terminus: Lon protease (813 aa).

A Lon N-terminal domain is found at 30 to 225; the sequence is LPILPVRNIV…WLLQLMDKDI (196 aa). 376 to 383 is an ATP binding site; it reads GPPGVGKT. The Lon proteolytic domain maps to 612–793; it reads DDLAGIVTGL…DEVLAIALLK (182 aa). Catalysis depends on residues Ser699 and Lys742.

It belongs to the peptidase S16 family. As to quaternary structure, homohexamer. Organized in a ring with a central cavity.

Its subcellular location is the cytoplasm. It catalyses the reaction Hydrolysis of proteins in presence of ATP.. Its function is as follows. ATP-dependent serine protease that mediates the selective degradation of mutant and abnormal proteins as well as certain short-lived regulatory proteins. Required for cellular homeostasis and for survival from DNA damage and developmental changes induced by stress. Degrades polypeptides processively to yield small peptide fragments that are 5 to 10 amino acids long. Binds to DNA in a double-stranded, site-specific manner. This is Lon protease from Cytophaga hutchinsonii (strain ATCC 33406 / DSM 1761 / CIP 103989 / NBRC 15051 / NCIMB 9469 / D465).